Here is a 338-residue protein sequence, read N- to C-terminus: Fructose-1,6-bisphosphatase class 1 (338 aa).

Mg(2+) is bound by residues Glu91, Asp113, Leu115, and Asp116. Substrate-binding positions include 116 to 119, Asn208, and Lys274; that span reads DGSS. Position 280 (Glu280) interacts with Mg(2+).

This sequence belongs to the FBPase class 1 family. In terms of assembly, homotetramer. The cofactor is Mg(2+).

It localises to the cytoplasm. It catalyses the reaction beta-D-fructose 1,6-bisphosphate + H2O = beta-D-fructose 6-phosphate + phosphate. The protein operates within carbohydrate biosynthesis; gluconeogenesis. In Ralstonia nicotianae (strain ATCC BAA-1114 / GMI1000) (Ralstonia solanacearum), this protein is Fructose-1,6-bisphosphatase class 1.